A 321-amino-acid polypeptide reads, in one-letter code: Glucokinase (321 aa).

Residue 8–13 (GDVGGT) coordinates ATP.

The protein belongs to the bacterial glucokinase family.

It localises to the cytoplasm. The enzyme catalyses D-glucose + ATP = D-glucose 6-phosphate + ADP + H(+). This Enterobacter sp. (strain 638) protein is Glucokinase.